Here is a 159-residue protein sequence, read N- to C-terminus: MYIAILKCESMGRCKHNGEVSIFGVRPASFPNFPFHLMDKIGGFVILDELWLRRWCEIIEYPMRIPTLYVPIEDYGIPTVEDMDLIVDFIKYHVSKEKEVVVSCIGGHGRTGTVLAVWAGLNGIKNPIEYVRERYCECAVETEEQEEFVIEYLKMKKRG.

The protein to M.jannaschii MJECL20.

This is an uncharacterized protein from Methanocaldococcus jannaschii (strain ATCC 43067 / DSM 2661 / JAL-1 / JCM 10045 / NBRC 100440) (Methanococcus jannaschii).